We begin with the raw amino-acid sequence, 588 residues long: Succinate dehydrogenase flavoprotein subunit (588 aa).

Residues 14–19 (GAGGAG), 37–52 (SKVFPTRSHTVSAQGG), and aspartate 221 contribute to the FAD site. Position 45 is a tele-8alpha-FAD histidine (histidine 45). Positions 242 and 254 each coordinate substrate. Catalysis depends on arginine 286, which acts as the Proton acceptor. Histidine 354 contributes to the substrate binding site. An FAD-binding site is contributed by glutamate 388. Substrate is bound at residue arginine 399. Residue 404–405 (SL) coordinates FAD.

It belongs to the FAD-dependent oxidoreductase 2 family. FRD/SDH subfamily. As to quaternary structure, part of an enzyme complex containing four subunits: a flavoprotein, an iron-sulfur, cytochrome b-556, and a hydrophobic anchor protein. Requires FAD as cofactor.

The protein localises to the cell inner membrane. The catalysed reaction is a quinone + succinate = fumarate + a quinol. It participates in carbohydrate metabolism; tricarboxylic acid cycle; fumarate from succinate (bacterial route): step 1/1. In terms of biological role, two distinct, membrane-bound, FAD-containing enzymes are responsible for the catalysis of fumarate and succinate interconversion; the fumarate reductase is used in anaerobic growth, and the succinate dehydrogenase is used in aerobic growth. This chain is Succinate dehydrogenase flavoprotein subunit (sdhA), found in Salmonella typhimurium (strain LT2 / SGSC1412 / ATCC 700720).